Consider the following 846-residue polypeptide: MASSHTPMMQQYLRIKTDYPDMLLFYRMGDFYELFFDDAKRASQLLDLTLTHRGQSADKPIPMAGVPYHAVENYLARLLKKGESVAICEQIGDPATSKGPVERQVTRIITPGTVTDEALLDARKDNILLAIHTQKQKIGIAWVDLGGGRFHLQELTEEHQLNAELVRLQPAELLCKESTPLPSFCSNFAVKFRPGWEFDASNAHKLLCEQFSVTDLSAFGEQNYPTALIAAGALLAYLKTTQKQSLPHLTTLTLEQSEDYLQLDASTQKHLELFENIHGGGEHCLLSILDKTACAMGSRLLKRWLGKPLKQHAIIQTRQQAIKEIIFLQQDVSLHQLIKQCADVERIVSRIALKSARPRDLVSLLQTLTLLPAIHDELQENKSLLINEIKKEISPLPLLQQLLETAIIDNPPMLIRDGGVIAPGFDEELDELRNLSSNAHETLVKLEQEEKNRTGLSTLKLGYNSVQGFYIELSKAQAQNAPPHFHRKQTLKNVERYITPELKLFEDKVLSAQSKALAREKWLYDNLLEEIQQYIPELSDLAKSLAQLDVLVTLAERAQSLNWNCPNLVPESGIMIQAGRHPVIEPLLQERFIANDLELKPNQNMLLITGPNMGGKSTYMRQTALIVLLAHIGSFVPADKVTLGPLDRIFTRIGASDDLSSGRSTFMVEMTETAQILRQATSQSLVLIDEIGRGTSTYDGMALAYASCAFLASTIKAYTLFSTHYLELTELPKEFSCIRNVHLQASIKTGQIVFLYRVEEGCANRSYGLEVAELAGIPKEVLKLAHEHLNQIQDTQSILVQTQIIKPPTSPVLTELKKIDPDRLTAKEALDLIYKLKHLECAESIN.

610-617 serves as a coordination point for ATP; sequence GPNMGGKS.

The protein belongs to the DNA mismatch repair MutS family.

Its function is as follows. This protein is involved in the repair of mismatches in DNA. It is possible that it carries out the mismatch recognition step. This protein has a weak ATPase activity. This is DNA mismatch repair protein MutS from Legionella pneumophila (strain Corby).